A 386-amino-acid polypeptide reads, in one-letter code: Agamous-like MADS-box protein AGL30 (386 aa).

One can recognise an MADS-box domain in the interval 1–53 (MGRVKLKIKKLENTNGRQSTFAKRKNGILKKANELSILCDIDIVLLMFSPTGK). The interval 341–360 (PDSSAYNDNTNQTRFGSSSS) is disordered. The span at 344–356 (SAYNDNTNQTRFG) shows a compositional bias: polar residues.

Forms heterodimers with AGL66 and AGL104. Expressed in pollen.

Its subcellular location is the nucleus. In terms of biological role, probable transcription factor that forms heterodimers with the MADS-box proteins AGL66 and AGL104 and is involved in the regulation of pollen maturation at the late stages of pollen development and pollen tube growth. In Arabidopsis thaliana (Mouse-ear cress), this protein is Agamous-like MADS-box protein AGL30.